The chain runs to 365 residues: Histidinol-phosphate aminotransferase (365 aa).

K222 is modified (N6-(pyridoxal phosphate)lysine).

The protein belongs to the class-II pyridoxal-phosphate-dependent aminotransferase family. Histidinol-phosphate aminotransferase subfamily. In terms of assembly, homodimer. Pyridoxal 5'-phosphate serves as cofactor.

It carries out the reaction L-histidinol phosphate + 2-oxoglutarate = 3-(imidazol-4-yl)-2-oxopropyl phosphate + L-glutamate. Its pathway is amino-acid biosynthesis; L-histidine biosynthesis; L-histidine from 5-phospho-alpha-D-ribose 1-diphosphate: step 7/9. This chain is Histidinol-phosphate aminotransferase, found in Geobacillus sp. (strain WCH70).